Consider the following 894-residue polypeptide: Phosphinomethylmalate isomerase (894 aa).

The [4Fe-4S] cluster site is built by Cys438, Cys504, and Cys507.

Belongs to the aconitase/IPM isomerase family. [4Fe-4S] cluster is required as a cofactor.

It catalyses the reaction phosphinomethylmalate = phosphinomethylisomalate. The enzyme catalyses phosphinomethylmalate = 2-(phosphinatomethylidene)butanedioate + H2O. The catalysed reaction is 2-(phosphinatomethylidene)butanedioate + H2O = phosphinomethylisomalate. It participates in secondary metabolite biosynthesis; bialaphos biosynthesis. Functionally, isomerase involved in the biosynthesis of phosphinothricin tripeptide (PTT), also known as bialaphos (BA), a natural-product antibiotic and potent herbicide. Probably catalyzes the isomerization of phosphinomethylmalate to phosphinomethylisomalate. Shows no standard aconitase activity with citrate as a substrate and is not able to complement an acnA mutant. This Streptomyces viridochromogenes (strain DSM 40736 / JCM 4977 / BCRC 1201 / Tue 494) protein is Phosphinomethylmalate isomerase.